Reading from the N-terminus, the 96-residue chain is UPF0235 protein Ent638_3359 (96 aa).

The protein belongs to the UPF0235 family.

This Enterobacter sp. (strain 638) protein is UPF0235 protein Ent638_3359.